Consider the following 237-residue polypeptide: Deoxyribose-phosphate aldolase (237 aa).

Catalysis depends on D94, which acts as the Proton donor/acceptor. K158 functions as the Schiff-base intermediate with acetaldehyde in the catalytic mechanism. The active-site Proton donor/acceptor is K187.

Belongs to the DeoC/FbaB aldolase family. DeoC type 1 subfamily.

The protein localises to the cytoplasm. It carries out the reaction 2-deoxy-D-ribose 5-phosphate = D-glyceraldehyde 3-phosphate + acetaldehyde. Its pathway is carbohydrate degradation; 2-deoxy-D-ribose 1-phosphate degradation; D-glyceraldehyde 3-phosphate and acetaldehyde from 2-deoxy-alpha-D-ribose 1-phosphate: step 2/2. Catalyzes a reversible aldol reaction between acetaldehyde and D-glyceraldehyde 3-phosphate to generate 2-deoxy-D-ribose 5-phosphate. This chain is Deoxyribose-phosphate aldolase, found in Lactobacillus acidophilus (strain ATCC 700396 / NCK56 / N2 / NCFM).